The following is a 345-amino-acid chain: Mycothiol acetyltransferase (345 aa).

N-acetyltransferase domains lie at 6-149 (DTYE…KAME) and 164-345 (FEVL…RGRL). Position 39 (Glu-39) interacts with 1D-myo-inositol 2-(L-cysteinylamino)-2-deoxy-alpha-D-glucopyranoside. Position 76-78 (76-78 (LAV)) interacts with acetyl-CoA. 1D-myo-inositol 2-(L-cysteinylamino)-2-deoxy-alpha-D-glucopyranoside contacts are provided by Glu-198, Lys-261, and Glu-277. Acetyl-CoA-binding positions include 281-283 (VCL) and 288-294 (RGRGLGQ). Tyr-315 serves as a coordination point for 1D-myo-inositol 2-(L-cysteinylamino)-2-deoxy-alpha-D-glucopyranoside.

Belongs to the acetyltransferase family. MshD subfamily. As to quaternary structure, monomer.

It carries out the reaction 1D-myo-inositol 2-(L-cysteinylamino)-2-deoxy-alpha-D-glucopyranoside + acetyl-CoA = mycothiol + CoA + H(+). Functionally, catalyzes the transfer of acetyl from acetyl-CoA to desacetylmycothiol (Cys-GlcN-Ins) to form mycothiol. This chain is Mycothiol acetyltransferase, found in Corynebacterium jeikeium (strain K411).